Consider the following 51-residue polypeptide: Sec-independent protein translocase protein TatA (51 aa).

A helical membrane pass occupies residues 1 to 21 (MGMSFSHLLIILLIIFVLFGA).

Belongs to the TatA/E family. As to quaternary structure, the Tat system comprises two distinct complexes: a TatABC complex, containing multiple copies of TatA, TatB and TatC subunits, and a separate TatA complex, containing only TatA subunits. Substrates initially bind to the TatABC complex, which probably triggers association of the separate TatA complex to form the active translocon.

It is found in the cell inner membrane. Part of the twin-arginine translocation (Tat) system that transports large folded proteins containing a characteristic twin-arginine motif in their signal peptide across membranes. TatA could form the protein-conducting channel of the Tat system. In Rickettsia bellii (strain RML369-C), this protein is Sec-independent protein translocase protein TatA.